The chain runs to 396 residues: Na(+)/H(+) antiporter NhaA (396 aa).

11 helical membrane passes run 16–36 (GIIL…GLAG), 59–79 (LLLW…GLEV), 95–115 (TFPA…YAFF), 124–144 (AGWA…MALL), 154–174 (VFLL…IALF), 178–198 (QLSL…LWMN), 213–233 (LVLW…GVIV), 254–274 (ALHP…NAGV), 278–298 (GIGL…GLFI), 328–348 (IFAV…IASL), and 363–383 (LGIL…LRIA).

The protein belongs to the NhaA Na(+)/H(+) (TC 2.A.33) antiporter family.

It localises to the cell inner membrane. It catalyses the reaction Na(+)(in) + 2 H(+)(out) = Na(+)(out) + 2 H(+)(in). Functionally, na(+)/H(+) antiporter that extrudes sodium in exchange for external protons. The chain is Na(+)/H(+) antiporter NhaA from Aeromonas hydrophila subsp. hydrophila (strain ATCC 7966 / DSM 30187 / BCRC 13018 / CCUG 14551 / JCM 1027 / KCTC 2358 / NCIMB 9240 / NCTC 8049).